The sequence spans 1235 residues: Topoisomerase 1-associated factor 1 (1235 aa).

Disordered stretches follow at residues 327 to 357 (RERK…GPPV), 584 to 610 (GEEA…HAER), 812 to 841 (EGAA…TEAR), and 897 to 1235 (EFSP…SDEE). Residues 585–603 (EEAEDVGVPEDNDADDSGD) are compositionally biased toward acidic residues. Positions 929–947 (DDDEEEIRGFLGDDDDEDF) are enriched in acidic residues. Positions 964-973 (QKKRQRKRRR) are enriched in basic residues. A compositionally biased stretch (acidic residues) spans 977 to 986 (SGDEEDEGVS). Over residues 999-1044 (EKELEKIRKIKSEMYVHASDDETDDERDREFFERERKRQETKDSKF) the composition is skewed to basic and acidic residues. Composition is skewed to acidic residues over residues 1070–1081 (VLDDEPESDESE) and 1099–1118 (SEEE…SDEE). Residues 1124-1150 (AKSKTSKRKAAVPSKRPARRPGTAKKR) show a composition bias toward basic residues. Positions 1156–1170 (SDNDEDEDEEEDAMD) are enriched in acidic residues. The span at 1193-1202 (LGRRIDKMAM) shows a compositional bias: basic and acidic residues. Positions 1203 to 1212 (DDGDEDEDDQ) are enriched in acidic residues.

It belongs to the timeless family. Component of the fork protection complex (FPC) consisting of tof-1 and csm-3.

The protein resides in the nucleus. Its function is as follows. Forms a fork protection complex (FPC) with csm-3 and which is required for chromosome segregation during meiosis and DNA damage repair. FPC coordinates leading and lagging strand synthesis and moves with the replication fork. FPC stabilizes replication forks in a configuration that is recognized by replication checkpoint sensors. The protein is Topoisomerase 1-associated factor 1 (tof-1) of Neurospora crassa (strain ATCC 24698 / 74-OR23-1A / CBS 708.71 / DSM 1257 / FGSC 987).